The chain runs to 234 residues: Nitroreductase NfnB (234 aa).

Position 25–29 (25–29 (RRAVR)) interacts with FMN. Residues Ser-55, Arg-105, Tyr-113, and Ile-118 each coordinate NADP(+). FMN contacts are provided by residues Tyr-137, 181-182 (AL), and Arg-223.

It belongs to the nitroreductase family. Homodimer. It depends on FMN as a cofactor.

Its function is as follows. Confers resistance to antitubercular drugs benzothiazinone (BTZ) and dinitrobenzamide (DNB). Inactivates BTZ and DNB by reducing an essential nitro group of these compounds to amino group or to hydroxyl amine, respectively, using NADH or NADPH as source of reducing equivalents; two electrons are transferred. Able to reduce the nitro group of bicyclic nitroimidazole PA-824, but not of quinone menadione, nitrofurazone, methyl-4-nitrobenzoate, 4-nitrobenzene methyl sulfonate or 4-nitroacetophenone. In Mycolicibacterium smegmatis (strain ATCC 700084 / mc(2)155) (Mycobacterium smegmatis), this protein is Nitroreductase NfnB.